The chain runs to 170 residues: SKP1-like protein 16 (170 aa).

Positions 109–167 (ILAVNYLNVQDLLGLTCQTVADHMKDMSPEEVRELFNIENDYTPEEEDAIRKENAWAFE) are interaction with the F-box domain of F-box proteins.

It belongs to the SKP1 family. Part of a SCF (SKP1-cullin-F-box) protein ligase complex. Interacts with CPR1/CPR30, At3g61590 and At4g11590. As to expression, mainly detected in the siliques.

Its subcellular location is the nucleus. It functions in the pathway protein modification; protein ubiquitination. Its function is as follows. Involved in ubiquitination and subsequent proteasomal degradation of target proteins. Together with CUL1, RBX1 and a F-box protein, it forms a SCF E3 ubiquitin ligase complex. The functional specificity of this complex depends on the type of F-box protein. In the SCF complex, it serves as an adapter that links the F-box protein to CUL1. The polypeptide is SKP1-like protein 16 (ASK16) (Arabidopsis thaliana (Mouse-ear cress)).